The primary structure comprises 626 residues: Nuclear receptor subfamily 4 group A member 3 (626 aa).

The tract at residues 1–108 is activation function (AF)-1 domain; that stretch reads MPCVQAQYSP…HHHHHHHHHH (108 aa). Residues 1–138 are required for DNA-PK heterotrimer; that stretch reads MPCVQAQYSP…PSTSMYFKQS (138 aa). Positions 1–291 are interaction with NCOA1, NCOA2, NCOA3 and KAT2B; the sequence is MPCVQAQYSP…SRSSSSGEGT (291 aa). Disordered regions lie at residues 92-152, 192-211, and 265-284; these read PSYH…PPQA, HFKPSPPHPPAPSPAGGHHL, and PTASSLLGESPSLPSPPSRS. Residues 93-110 show a composition bias toward basic residues; sequence SYHHHHHHHHHHHHHHQQ. Composition is skewed to pro residues over residues 140–149 and 195–204; these read PSTPTTPAFP and PSPPHPPAPS. The span at 268–284 shows a compositional bias: low complexity; it reads SSLLGESPSLPSPPSRS. The nuclear receptor DNA-binding region spans 289 to 364; it reads EGTCAVCGDN…VGMVKEVVRT (76 aa). 2 consecutive NR C4-type zinc fingers follow at residues 292–312 and 328–352; these read CAVCGDNAACQHYGVRTCEGC and CLANKNCPVDKRRRNRCQYCRFQKC. The disordered stretch occupies residues 364-394; it reads TDSLKGRRGRLPSKPKSPLQQEPSQPSPPSP. The span at 377 to 387 shows a compositional bias: low complexity; the sequence is KPKSPLQQEPS. Positions 379-626 are interaction with KAT2B; the sequence is KSPLQQEPSQ…DKLFLDTLPF (248 aa). Residues 394–623 enclose the NR LBD domain; the sequence is PPICMMNALV…SIIDKLFLDT (230 aa).

Belongs to the nuclear hormone receptor family. NR4 subfamily. As to quaternary structure, interacts with SIX3 (via homeobox); differentially regulates the transcriptional activities of NR4A3. Interacts with the constituents of DNA-PK heterotrimer PRKDC, XRCC6 and XRCC5; phosphorylates and prevents NR4A3 ubiquitinylation and degradation. Interacts with NCOA2; potentiates the activity of the NR4A3. Interacts with NCOA1, NCOA3, MED1 and KAT2B. Interacts with EP300 and NCOA2; mediates the recruitment of MED1 in the coactivator complex. Interacts with NR3C1 (via nuclear receptor DNA-binding domain); the interactions represses transcription activity of NR4A3 on the POMC promoter Nur response element (NurRE). Interacts with TRIM28; the interactions potentiates NR4A3 activity on NurRE promoter. Binds DNA as a monomer and homodimer. Interacts with PARP1; activates PARP1 by improving acetylation of PARP1 and suppressing the interaction between PARP1 and SIRT1. Post-translationally, phosphorylated by PRKDC. As to expression, isoform alpha is highly expressed in skeletal muscle. Isoform beta is highly expressed in skeletal muscle and low expressed in fetal brain and placenta.

The protein localises to the nucleus. In terms of biological role, transcriptional activator that binds to regulatory elements in promoter regions in a cell- and response element (target)-specific manner. Induces gene expression by binding as monomers to the NR4A1 response element (NBRE) 5'-AAAAGGTCA-3' site and as homodimers to the Nur response element (NurRE) site in the promoter of their regulated target genes. Plays a role in the regulation of proliferation, survival and differentiation of many different cell types and also in metabolism and inflammation. Mediates proliferation of vascular smooth muscle, myeloid progenitor cell and type B pancreatic cells; promotes mitogen-induced vascular smooth muscle cell proliferation through transactivation of SKP2 promoter by binding a NBRE site. Upon PDGF stimulation, stimulates vascular smooth muscle cell proliferation by regulating CCND1 and CCND2 expression. In islets, induces type B pancreatic cell proliferation through up-regulation of genes that activate cell cycle, as well as genes that cause degradation of the CDKN1A. Negatively regulates myeloid progenitor cell proliferation by repressing RUNX1 in a NBRE site-independent manner. During inner ear, plays a role as a key mediator of the proliferative growth phase of semicircular canal development. Also mediates survival of neuron and smooth muscle cells; mediates CREB-induced neuronal survival, and during hippocampus development, plays a critical role in pyramidal cell survival and axonal guidance. Is required for S phase entry of the cell cycle and survival of smooth muscle cells by inducing CCND1, resulting in RB1 phosphorylation. Binds to NBRE motif in CCND1 promoter, resulting in the activation of the promoter and CCND1 transcription. Also plays a role in inflammation; upon TNF stimulation, mediates monocyte adhesion by inducing the expression of VCAM1 and ICAM1 by binding to the NBRE consensus site. In mast cells activated by Fc-epsilon receptor cross-linking, promotes the synthesis and release of cytokines but impairs events leading to degranulation. Also plays a role in metabolism; by modulating feeding behavior; and by playing a role in energy balance by inhibiting the glucocorticoid-induced orexigenic neuropeptides AGRP expression, at least in part by forming a complex with activated NR3C1 on the AGRP- glucocorticoid response element (GRE), and thus weakening the DNA binding activity of NR3C1. Upon catecholamines stimulation, regulates gene expression that controls oxidative metabolism in skeletal muscle. Plays a role in glucose transport by regulating translocation of the SLC2A4 glucose transporter to the cell surface. Finally, during gastrulation plays a crucial role in the formation of anterior mesoderm by controlling cell migration. Inhibits adipogenesis. Also participates in cardiac hypertrophy by activating PARP1. The protein is Nuclear receptor subfamily 4 group A member 3 (NR4A3) of Homo sapiens (Human).